The primary structure comprises 218 residues: Elongation factor Ts (218 aa).

The involved in Mg(2+) ion dislocation from EF-Tu stretch occupies residues 82-85 (TDFV).

Belongs to the EF-Ts family.

It localises to the cytoplasm. Its function is as follows. Associates with the EF-Tu.GDP complex and induces the exchange of GDP to GTP. It remains bound to the aminoacyl-tRNA.EF-Tu.GTP complex up to the GTP hydrolysis stage on the ribosome. The sequence is that of Elongation factor Ts from Prochlorococcus marinus (strain NATL2A).